A 36-amino-acid polypeptide reads, in one-letter code: Photosystem I reaction center subunit VIII (36 aa).

Residues 8–28 (SILVPLVGLVFPAIAMASLFL) form a helical membrane-spanning segment.

It belongs to the PsaI family.

Its subcellular location is the plastid. It is found in the chloroplast thylakoid membrane. Functionally, may help in the organization of the PsaL subunit. The chain is Photosystem I reaction center subunit VIII from Vitis vinifera (Grape).